Here is a 345-residue protein sequence, read N- to C-terminus: MAGATDQRRQEVLRAIVADYIASQEPVGSKALLERHNLKVSSATIRNDMAVLESEGYIVQQHASSGRIPTEKAYRTFVDSINDIKPLSVAERRAILGFLERGVDLEDVLKRSVQLLSQLTRQAAVIQLPNLNVSRVKHCEVVLLSPVRLLLVLITDNGRVEQRNVEVDQICEPEHVAKMRDVLNRALDNKTLSDASASLAELAAGEILVDPDIQPMILRCATVLIETLVEQPNDRLILAGASNLTHIAREMPSSLPAMLEALEEQVVVLKLLTNVRDLGHVSVLIGEENEDEQLRGTSVVTTGYGAQGATLGGLGVVGPTFMDYSGTMSKVYAVAHYVSRVLSGG.

It belongs to the HrcA family.

Functionally, negative regulator of class I heat shock genes (grpE-dnaK-dnaJ and groELS operons). Prevents heat-shock induction of these operons. This is Heat-inducible transcription repressor HrcA from Corynebacterium diphtheriae (strain ATCC 700971 / NCTC 13129 / Biotype gravis).